Here is a 341-residue protein sequence, read N- to C-terminus: Holliday junction branch migration complex subunit RuvB (341 aa).

Positions 1 to 180 are large ATPase domain (RuvB-L); it reads MAKSHTLNPE…FGIQLRLDYY (180 aa). ATP is bound by residues leucine 19, arginine 20, glycine 61, lysine 64, threonine 65, threonine 66, arginine 170, tyrosine 180, and arginine 217. Threonine 65 is a Mg(2+) binding site. Positions 181–251 are small ATPAse domain (RuvB-S); it reads NDEEMKEIVL…LCLKAFEKMG (71 aa). Residues 254–341 form a head domain (RuvB-H) region; it reads DLGLDGMDRQ…ENHGQDPTLF (88 aa). Residues arginine 309 and arginine 314 each contribute to the DNA site.

This sequence belongs to the RuvB family. Homohexamer. Forms an RuvA(8)-RuvB(12)-Holliday junction (HJ) complex. HJ DNA is sandwiched between 2 RuvA tetramers; dsDNA enters through RuvA and exits via RuvB. An RuvB hexamer assembles on each DNA strand where it exits the tetramer. Each RuvB hexamer is contacted by two RuvA subunits (via domain III) on 2 adjacent RuvB subunits; this complex drives branch migration. In the full resolvosome a probable DNA-RuvA(4)-RuvB(12)-RuvC(2) complex forms which resolves the HJ.

Its subcellular location is the cytoplasm. The enzyme catalyses ATP + H2O = ADP + phosphate + H(+). In terms of biological role, the RuvA-RuvB-RuvC complex processes Holliday junction (HJ) DNA during genetic recombination and DNA repair, while the RuvA-RuvB complex plays an important role in the rescue of blocked DNA replication forks via replication fork reversal (RFR). RuvA specifically binds to HJ cruciform DNA, conferring on it an open structure. The RuvB hexamer acts as an ATP-dependent pump, pulling dsDNA into and through the RuvAB complex. RuvB forms 2 homohexamers on either side of HJ DNA bound by 1 or 2 RuvA tetramers; 4 subunits per hexamer contact DNA at a time. Coordinated motions by a converter formed by DNA-disengaged RuvB subunits stimulates ATP hydrolysis and nucleotide exchange. Immobilization of the converter enables RuvB to convert the ATP-contained energy into a lever motion, pulling 2 nucleotides of DNA out of the RuvA tetramer per ATP hydrolyzed, thus driving DNA branch migration. The RuvB motors rotate together with the DNA substrate, which together with the progressing nucleotide cycle form the mechanistic basis for DNA recombination by continuous HJ branch migration. Branch migration allows RuvC to scan DNA until it finds its consensus sequence, where it cleaves and resolves cruciform DNA. The polypeptide is Holliday junction branch migration complex subunit RuvB (Leptospira borgpetersenii serovar Hardjo-bovis (strain L550)).